The sequence spans 498 residues: NAC domain-containing protein 75 (498 aa).

The NAC domain maps to 48–215 (LPAGVKFDPT…ELVVSKIFYQ (168 aa)). The DNA-binding element occupies 166-221 (KGCKKILVLYTNFGKNRKPEKTNWVMHQYHLGTHEEEKEGELVVSKIFYQTQPRQC). 4 disordered regions span residues 225 to 278 (SSTS…PNRS), 338 to 374 (VMAE…QRHH), 423 to 443 (QQQL…GGRS), and 457 to 498 (STTH…DHHG). The span at 233 to 248 (IGGGGGEASSGGGGGE) shows a compositional bias: gly residues. A compositionally biased stretch (low complexity) spans 256–266 (GTTSGGSCSSS). A compositionally biased stretch (basic residues) spans 356–374 (HMAHDHHHHHHQQQQQRHH). Positions 466-475 (GSSSMGNQQE) are enriched in polar residues.

Expressed in the vascular cylinder of roots. Expressed in the differentiation zone of the root stele.

Its subcellular location is the nucleus. Transcription activator involved in xylem formation. Promotes the expression of the secondary wall-associated transcription factor MYB46. Functions upstream of NAC030/VND7, a master switch of xylem vessel differentiation. Acts as a upstream regulator of NAC101/VND6 and LBD30/ASL19. The sequence is that of NAC domain-containing protein 75 from Arabidopsis thaliana (Mouse-ear cress).